The following is a 176-amino-acid chain: tRNA (cytidine(56)-2'-O)-methyltransferase (176 aa).

S-adenosyl-L-methionine-binding positions include Leu-86 and 111-115 (GAEKV).

It belongs to the aTrm56 family. Homodimer.

Its subcellular location is the cytoplasm. It catalyses the reaction cytidine(56) in tRNA + S-adenosyl-L-methionine = 2'-O-methylcytidine(56) in tRNA + S-adenosyl-L-homocysteine + H(+). Its function is as follows. Specifically catalyzes the AdoMet-dependent 2'-O-ribose methylation of cytidine at position 56 in tRNAs. This Methanoregula boonei (strain DSM 21154 / JCM 14090 / 6A8) protein is tRNA (cytidine(56)-2'-O)-methyltransferase.